Reading from the N-terminus, the 496-residue chain is Hexokinase-2 (496 aa).

Residues 4 to 24 (ATVGAVVVGTAAAVAVAALIM) form a helical membrane-spanning segment. Positions 35 to 487 (ARARAILKEF…SGIGAALLAA (453 aa)) constitute a Hexokinase domain. The segment at 90-228 (TGDEGGVFYA…EIDMRVSALV (139 aa)) is hexokinase small subdomain. 3 residues coordinate ADP: G104, T105, and N106. The D-glucose site is built by T194, K195, N229, and D230. Residues 229–476 (NDTVGTLAGG…TSIVFKHAND (248 aa)) form a hexokinase large subdomain region. ADP is bound at residue T253. D-glucose is bound by residues N256, E284, and E315. Position 441 (G441) interacts with ADP.

The protein belongs to the hexokinase family.

It localises to the plastid. It is found in the chloroplast outer membrane. It carries out the reaction a D-hexose + ATP = a D-hexose 6-phosphate + ADP + H(+). The enzyme catalyses D-fructose + ATP = D-fructose 6-phosphate + ADP + H(+). The catalysed reaction is D-glucose + ATP = D-glucose 6-phosphate + ADP + H(+). It participates in carbohydrate metabolism; hexose metabolism. It functions in the pathway carbohydrate degradation; glycolysis; D-glyceraldehyde 3-phosphate and glycerone phosphate from D-glucose: step 1/4. Fructose and glucose phosphorylating enzyme. May be involved in the phosphorylation of glucose during the export from plastids to cytosol. Seems neither to be involved in cell sugar sensing nor in carbohydrate metabolism in tuber. The polypeptide is Hexokinase-2 (HXK2) (Solanum tuberosum (Potato)).